Consider the following 277-residue polypeptide: Transcription factor HES-4-B (277 aa).

Positions 1–44 (MPADSMEKPTASPIAGAPANSAQTPDKPKSASEHRKSSKPIMEK) are disordered. Residues 26 to 35 (DKPKSASEHR) are compositionally biased toward basic and acidic residues. The 58-residue stretch at 34–91 (HRKSSKPIMEKRRRARINESLGQLKTLILDALKKDSSRHSKLEKADILEMTVKHLRNL) folds into the bHLH domain. The Orange domain maps to 110 to 143 (YRAGFNECMNEVTRFLSTCEGVNTEVRTRLLGHL). Residues 258–277 (VSPLGGSTRADSAESVWRPW) are disordered. The WRPW motif signature appears at 274-277 (WRPW).

In terms of assembly, transcription repression requires formation of a complex with a corepressor protein of the Groucho/TLE family. Interacts with the bHLH protein hes6; this interaction may inhibit the transcriptional repressor activity. Binds DNA in the form of a heterodimer with the bHLH protein hey1/hrt1. Interacts (via Orange domain) with id3 (via HLH domain). In terms of tissue distribution, dynamically expressed in the borders of several tissue territories. Expressed in the pre-placodal ectoderm (PPE) from gastrula stage. During gastrulation, expressed in the deep layer of the dorsal lip, the Spemann organizer and three distinct regions in the prospective neuroectoderm: neural plate border, presumptive floor plate/notoplate and anterior neural plate. At later stages, expression is localized to the anterior of the prechordal plate, the presomitic mesoderm, neural tube, neural crest derivatives and several tissues of the central nervous system, with expression in the developing floor plate continues to at least the tadpole stage. From the early tailbud stage, expressed in the dorsoanterior region of the developing pronephros. During early tailbud stages, broadly expressed within the pronephric mesoderm. and in the sensorial layer of the ectoderm covering the pronephros anlagen. During late tailbud to early tadpole stages, expressed in the ventral region of the pronephros. Expression remains in the proximal and distal tubules at late tadpole stages (stage 35).

Its subcellular location is the nucleus. Transcriptional repressor. Binds DNA on N-box motifs: 5'-CACNAG-3'. Promotes floor plate development and prechordal plate development. Required for lens development as early as the stage of lens field formation, partly through regulation of gene expression of the cell cycle inhibitor cdknx/p27(xic1). Required for formation of the neural crest downstream of multiple signaling pathways, and acts at the neural plate border via both DNA-binding dependent and independent mechanisms; acts in a DNA-binding dependent manner to repress pro-apoptotic and neural crest differentiation genes, including id3, delta1, and cdknx/p27(xic1), and thus promote the cell survival of neural plate border cells and maintain them in an undifferentiated state. Represses transcription of id3, at least in part through the repression of bmp4. On the other hand, acts in a DNA-independent manner separate from the transcriptional repressor function, to stimulate cell proliferation and promote neural crest formation. Via this DNA-independent route, acts in neurulae upstream of stat3 to transiently up-regulate the notch ligand dll1/delta1, which in turn up-regulates id3 expression. Then interacts directly with id3, which blocks the transcriptional repressor function of hes4-B/hairy2b to allow the progression of neural crest progenitors through specification and differentiation. Also acts via repressor-dependent and repressor-independent mechanisms in early gastrulae to establish the prospective anterior prechordal mesoderm identity in the Spemann organizer; induces specific genes independently from direct transcriptional regulation, and represses the genes specific for neighboring tissues through direct transcriptional repression. Modulates lateral inhibition during notch signaling and regulates the cell context dependent effects of notch (which can have inhibitory, permissive or enhancing roles in muscle or neural differentiation). Inhibits myogenesis. The polypeptide is Transcription factor HES-4-B (hes4-b) (Xenopus laevis (African clawed frog)).